A 33-amino-acid polypeptide reads, in one-letter code: uncharacterized protein (33 aa).

The segment at 1-24 is disordered; it reads MRTGTRCDLGELSHPRKTLPPRGM.

This is an uncharacterized protein from Treponema pallidum (strain Nichols).